A 1337-amino-acid polypeptide reads, in one-letter code: Partitioning defective 3 homolog (1337 aa).

Serine 25 carries the phosphoserine modification. 2 disordered regions span residues 81–109 (EQDP…SELG) and 143–263 (SSDP…LENM). Threonine 91 carries the post-translational modification Phosphothreonine. Low complexity predominate over residues 91–100 (TSASSTGTQS). Composition is skewed to polar residues over residues 150-163 (GLST…FSSE) and 171-188 (TRWS…TGSP). A phosphoserine mark is found at serine 156 and serine 174. Basic and acidic residues predominate over residues 190–203 (TCDRKKDENYRSLP). Residues 207-224 (SSWSNQFQRDNARSSLSA) are compositionally biased toward polar residues. In terms of domain architecture, PDZ 1 spans 271-359 (MVKLVQVPND…ARVIWFHVVP (89 aa)). Serine 383 bears the Phosphoserine mark. Residues 397 to 441 (NAPQALPRAPRLSQPPEQLDAHPRLPHSAHASTKPPTAPALAPPN) are disordered. 2 consecutive PDZ domains span residues 461–546 (NIQL…LVFR) and 590–677 (EVPL…GMIQ). Tyrosine 489 is subject to Phosphotyrosine. Phosphoserine is present on residues serine 692, serine 695, serine 715, serine 728, serine 809, and serine 827. Positions 712 to 936 (RRISHSLYSG…AAIDKSYDKP (225 aa)) are interaction with PRKCI and PRKCZ. Residue lysine 834 is modified to N6-acetyllysine. Serine 837 carries the phosphoserine modification. Lysine 851 is modified (N6-acetyllysine). 2 positions are modified to phosphoserine: serine 852 and serine 873. Disordered regions lie at residues 866-888 (VDDQ…KKSS), 932-1015 (SYDK…AKKG), 1028-1055 (KHRK…DRVR), 1110-1271 (LNAR…LGGH), and 1284-1337 (LLRQ…PFYS). Residue lysine 885 is modified to N6-acetyllysine. The interaction with FRMD4A stretch occupies residues 935–1337 (KPMVDDDDEG…TPEKGRPFYS (403 aa)). Over residues 939-953 (DDDDEGMETLEEDTE) the composition is skewed to acidic residues. Serine 962 is subject to Phosphoserine; by AURKA. Phosphoserine is present on residues serine 971 and serine 973. Basic and acidic residues-rich tracts occupy residues 981 to 1009 (DPEK…EKDK) and 1030 to 1043 (RKDD…RIKI). Serine 1046 is subject to Phosphoserine. Positions 1050 to 1082 (EEDRVRMKEEQERIQAKTREFRERQARERDYAE) form a coiled coil. Polar residues predominate over residues 1138–1147 (PGDSNRSTPS). The segment covering 1148 to 1175 (NHDRIQRLRQEFQQAKQDEDVEDRRRTY) has biased composition (basic and acidic residues). 3 coiled-coil regions span residues 1149–1172 (HDRI…EDRR), 1199–1222 (VQVQ…YSSL), and 1278–1299 (MLET…LKKQ). Positions 1180-1203 (SWSSSRPASQSGRHSVSVEVQVQR) are enriched in low complexity. Over residues 1219–1240 (YSSLPRQSRKNASSVSQDSWEQ) the composition is skewed to polar residues. A compositionally biased stretch (basic and acidic residues) spans 1284 to 1296 (LLRQEQRRKEQQL). Positions 1318–1327 (SQVARLNRLQ) are enriched in polar residues. A compositionally biased stretch (basic and acidic residues) spans 1328–1337 (TPEKGRPFYS). Lysine 1331 carries the N6-acetyllysine modification.

The protein belongs to the PAR3 family. As to quaternary structure, component of a complex whose core is composed of ARHGAP17, AMOT, PALS1, PATJ and PARD3/PAR3. Interacts (via PDZ 1 domain) with PARD6A, PARD6B and F11R/JAM1. Interacts with AURKA, AURKB and SIRT2. Interacts with PRKCI. Interacts with PRKCZ. Part of a complex with PARD6A or PARD6B, PRKCI or PRKCZ and CDC42 or RAC1. Interacts with LIMK2 and CDH5. Component of the Par polarity complex, composed of at least phosphorylated PRKCZ, PARD3 and TIAM1. Directly interacts with TIAM1 and TIAM2. Interacts with ECT2 and FBF1. Interacts (via PDZ 3 domain) with PTEN (via C-terminus). Interacts (via coiled-coil domain) with FRMD4A. Found in a complex with PARD3, CYTH1 and FRMD4A. Interacts with SAPCD2. Interacts with PRKCA. In terms of assembly, interacts with PRKCZ. In terms of processing, acetylated. Deacetylated by SIRT2, thereby inhibiting Schwann cell peripheral myelination. Post-translationally, phosphorylation at Ser-827 by PRKCZ and PRKCI occurs at the most apical tip of epithelial cell-cell contacts during the initial phase of tight junction formation and may promote dissociation of the complex with PARD6. EGF-induced Tyr-1127 phosphorylation mediates dissociation from LIMK2. Phosphorylation by AURKA at Ser-962 is required for the normal establishment of neuronal polarity. As to expression, isoform 1 is predominantly expressed in lung, glandular stomach, prostate, ovary and uterus. Isoform 1 is also expressed in brain, with a high expression in the cortex, hippocampus and in the striatum. Isoform 2 is predominantly expressed in intestinal epithelial cells, kidney and prostate.

Its subcellular location is the cytoplasm. The protein resides in the endomembrane system. It is found in the cell junction. The protein localises to the tight junction. It localises to the adherens junction. Its subcellular location is the cell cortex. The protein resides in the cytoskeleton. It is found in the cell membrane. In terms of biological role, adapter protein involved in asymmetrical cell division and cell polarization processes. Seems to play a central role in the formation of epithelial tight junctions. Association with PARD6B may prevent the interaction of PARD3 with F11R/JAM1, thereby preventing tight junction assembly. The PARD6-PARD3 complex links GTP-bound Rho small GTPases to atypical protein kinase C proteins. Required for establishment of neuronal polarity and normal axon formation in cultured hippocampal neurons. Involved in Schwann cell peripheral myelination. Targets the phosphatase PTEN to cell junctions. This Rattus norvegicus (Rat) protein is Partitioning defective 3 homolog (Pard3).